Reading from the N-terminus, the 436-residue chain is MIGGLFIYNHKGEVLISRVYRDDIGRNAVDAFRVNVIHARQQVRSPVTNIARTSFFHVKRSNIWLAAVTKQNVNAAMVFEFLYKMCDVMTAYFGKISEENIKNNFVLIYELLDEILDFGYPQNSETGALKTFITQQGIKSQHLTKEEQSQITSQVTGQIGWRREGIKYRRNELFLDVLESVNLLMSPQGQVLSAHVSGRVVMKSYLSGMPECKFGMNDKIVIDKQGKGGTTDDTGKSGKQSIAIDDCTFHQCVRLSKFDSERSISFIPPDGEYELMRYRTTKDIILPFRVIPLVREVGRTKLEVKVVIKSNFKPSLLAQKIEVRIPTPLNTSGVQVICMKGKAKYKASENAIVWKIKRMVGMKESQISAEIELLPTNDKKKWARPPISMNFEVPFAPSGLKVRYLKVFEPKLNYSDHDVIKWVRYIGRSGIYETRC.

In terms of domain architecture, MHD spans 170 to 435 (RNELFLDVLE…IGRSGIYETR (266 aa)). Residues Lys-342, Lys-346, and Lys-355 each contribute to the a 1,2-diacyl-sn-glycero-3-phospho-(1D-myo-inositol-3,4,5-trisphosphate) site.

It belongs to the adaptor complexes medium subunit family. In terms of assembly, adaptor protein complex 2 (AP-2) is a heterotetramer composed of two large adaptins (alpha-type subunit and beta-type subunit), a medium adaptin (mu-type subunit) and a small adaptin (sigma-type subunit).

The protein resides in the cell membrane. The protein localises to the membrane. It is found in the coated pit. Functionally, component of the adaptor complexes which link clathrin to receptors in coated vesicles. Clathrin-associated protein complexes are believed to interact with the cytoplasmic tails of membrane proteins, leading to their selection and concentration. AP50 is a subunit of the plasma membrane adaptor. The complex binds polyphosphoinositide-containing lipids. This chain is AP-2 complex subunit mu-B (ap2m1b), found in Danio rerio (Zebrafish).